Reading from the N-terminus, the 251-residue chain is NADPH-dependent oxidoreductase (251 aa).

Belongs to the flavin oxidoreductase frp family. Requires FMN as cofactor.

In terms of biological role, reduces FMN, organic nitro compounds and disulfide DTNB. Involved in maintenance of the cellular redox state and the disulfide stress response. The protein is NADPH-dependent oxidoreductase (nfrA) of Staphylococcus epidermidis (strain ATCC 35984 / DSM 28319 / BCRC 17069 / CCUG 31568 / BM 3577 / RP62A).